A 498-amino-acid chain; its full sequence is Angiopoietin-4 (498 aa).

The first 22 residues, 1–22 (MPSPPAMLLGGLLLIVASTTVA), serve as a signal peptide directing secretion. The interval 51–80 (EPEPCPPEPEAFGGSNSLQRDSPAATLNLG) is disordered. The stretch at 85-109 (QRMRQLEKMLENNTQWLQKLERYIQ) forms a coiled coil. N-linked (GlcNAc...) asparagine glycosylation is found at Asn96, Asn126, Asn158, Asn247, Asn295, Asn306, Asn332, and Asn424. A coiled-coil region spans residues 186–254 (HELHRLQGHN…SSNSSLLQRQ (69 aa)). In terms of domain architecture, Fibrinogen C-terminal spans 277–497 (RAADQLFQDC…TTRMMVRPSG (221 aa)). A disulfide bond links Cys286 and Cys315. A disulfide bond links Cys439 and Cys452.

Homodimer; disulfide-linked. Interacts with TEK/TIE2.

It is found in the secreted. Its function is as follows. Binds to TEK/TIE2, modulating ANGPT1 signaling. Can induce tyrosine phosphorylation of TEK/TIE2. Promotes endothelial cell survival, migration and angiogenesis. This Bos taurus (Bovine) protein is Angiopoietin-4 (ANGPT4).